Consider the following 336-residue polypeptide: Dihydroorotate dehydrogenase (quinone) (336 aa).

FMN contacts are provided by residues 62–66 (AGLDK) and Thr86. Lys66 contacts substrate. 111 to 115 (NRMGF) serves as a coordination point for substrate. Residues Asn139 and Asn172 each contribute to the FMN site. Substrate is bound at residue Asn172. Ser175 (nucleophile) is an active-site residue. Asn177 contacts substrate. FMN-binding residues include Lys217 and Thr245. 246–247 (NT) contributes to the substrate binding site. Residues Gly268, Gly297, and 318–319 (YS) contribute to the FMN site.

Belongs to the dihydroorotate dehydrogenase family. Type 2 subfamily. Monomer. Requires FMN as cofactor.

It is found in the cell membrane. The enzyme catalyses (S)-dihydroorotate + a quinone = orotate + a quinol. It participates in pyrimidine metabolism; UMP biosynthesis via de novo pathway; orotate from (S)-dihydroorotate (quinone route): step 1/1. Its function is as follows. Catalyzes the conversion of dihydroorotate to orotate with quinone as electron acceptor. This is Dihydroorotate dehydrogenase (quinone) from Citrobacter koseri (strain ATCC BAA-895 / CDC 4225-83 / SGSC4696).